A 495-amino-acid polypeptide reads, in one-letter code: Adenosylhomocysteinase (495 aa).

Thr-71, Asp-156, and Glu-218 together coordinate substrate. Residue 219 to 221 (TTT) coordinates NAD(+). 2 residues coordinate substrate: Lys-248 and Asp-252. NAD(+)-binding positions include Asn-253, 282-287 (GYGDVG), Glu-305, Asn-340, 361-363 (IGH), and Asn-409.

Belongs to the adenosylhomocysteinase family. It depends on NAD(+) as a cofactor.

Its subcellular location is the cytoplasm. The enzyme catalyses S-adenosyl-L-homocysteine + H2O = L-homocysteine + adenosine. It functions in the pathway amino-acid biosynthesis; L-homocysteine biosynthesis; L-homocysteine from S-adenosyl-L-homocysteine: step 1/1. Its function is as follows. May play a key role in the regulation of the intracellular concentration of adenosylhomocysteine. The chain is Adenosylhomocysteinase from Mycobacterium bovis (strain ATCC BAA-935 / AF2122/97).